Here is a 378-residue protein sequence, read N- to C-terminus: UPF0754 membrane protein BCE_0952 (378 aa).

A run of 2 helical transmembrane segments spans residues 1-21 (MNIW…GGFT) and 357-377 (YLGA…LLFL).

The protein belongs to the UPF0754 family.

Its subcellular location is the cell membrane. In Bacillus cereus (strain ATCC 10987 / NRS 248), this protein is UPF0754 membrane protein BCE_0952.